Consider the following 243-residue polypeptide: Ribosomal RNA small subunit methyltransferase J (243 aa).

S-adenosyl-L-methionine contacts are provided by residues 112–113 (ER) and D164.

The protein belongs to the methyltransferase superfamily. RsmJ family.

It is found in the cytoplasm. The enzyme catalyses guanosine(1516) in 16S rRNA + S-adenosyl-L-methionine = N(2)-methylguanosine(1516) in 16S rRNA + S-adenosyl-L-homocysteine + H(+). In terms of biological role, specifically methylates the guanosine in position 1516 of 16S rRNA. This Legionella pneumophila (strain Lens) protein is Ribosomal RNA small subunit methyltransferase J.